Consider the following 378-residue polypeptide: Response regulator aspartate phosphatase A (378 aa).

6 TPR repeats span residues 101–137 (YYFN…VSDD), 148–181 (AEIF…TVRR), 183–215 (QCEF…AKKE), 222–255 (SSAL…CKSE), 261–294 (PHSI…ARQY), and 336–369 (EELA…QKQI).

It belongs to the Rap family. As to quaternary structure, homodimer. Interacts with its substrate, phosphorylated Spo0F, and its inhibitor, the PhrA pentapeptide. The RapA dimer forms a stable complex with two molecules of phosphorylated Spo0F. The complex is dissociated after dephosphorylation of Spo0F by RapA. It depends on Mn(2+) as a cofactor.

The protein resides in the cytoplasm. With respect to regulation, phosphatase activity is inhibited by the phosphatase regulator PhrA. Interaction with PhrA dissociates the RapA-Spo0F complex. Activity is abolished in the presence of EDTA. Involved in the regulation of sporulation. Acts as a phosphatase that specifically dephosphorylates the sporulation initiation phosphotransferase Spo0F and inhibits its activity. This is Response regulator aspartate phosphatase A from Bacillus subtilis (strain 168).